Reading from the N-terminus, the 521-residue chain is Glucosidase 2 subunit beta (521 aa).

Residues 1-14 (MLLLLLLLLPLCWA) form the signal peptide. Position 24 is a phosphoserine (S24). LDL-receptor class A domains follow at residues 37 to 71 (FTCLDGTATIPFDQVNDDYCDCKDGSDEPGTAACP) and 69 to 113 (ACPN…TVCE). Cystine bridges form between C39-C58 and C56-C70. Residue D49 participates in substrate binding. Ca(2+) contacts are provided by Q50, D53, Y55, D57, D63, and E64. Substrate is bound at residue D53. N72 is a glycosylation site (N-linked (GlcNAc...) asparagine). 3 cysteine pairs are disulfide-bonded: C77-C99, C97-C112, and C100-C116. At S89 the chain carries Phosphoserine; by PKC. 6 residues coordinate Ca(2+): R91, D94, V96, D98, D104, and E105. N6-succinyllysine is present on K166. At S168 the chain carries Phosphoserine. EF-hand domains are found at residues 209–244 (REQERAASAFQELDDNMDGMVSLAELQTHPELDTDG) and 245–290 (DGAL…TDIP). Ca(2+)-binding residues include D222, N224, D226, M228, and E233. 2 disordered regions span residues 226-267 (DGMV…DTTS) and 280-350 (YRSE…EKMP). Composition is skewed to acidic residues over residues 241–253 (DTDGDGALSEEEA) and 308–331 (TEEEEEEEEEPEEEEEEEEEEEEA). Positions 332-343 (PPPLQPPQPPSP) are enriched in pro residues. S376 and S383 each carry phosphoserine; by PKC. An MRH domain is found at 406 to 507 (SQCYELTTNE…ELMTPAACPE (102 aa)). A disulfide bridge links C408 with C421. S427 carries the phosphoserine; by PKC modification. Intrachain disulfides connect C464/C493 and C478/C505. An N-linked (GlcNAc...) asparagine glycan is attached at N469. The short motif at 518-521 (HDEL) is the Prevents secretion from ER element.

Heterodimer of a catalytic alpha subunit (GANAB) and a beta subunit (PRKCSH). Binds glycosylated PTPRC. Expressed in kidney (at protein level).

It is found in the endoplasmic reticulum. It functions in the pathway glycan metabolism; N-glycan metabolism. In terms of biological role, regulatory subunit of glucosidase II that cleaves sequentially the 2 innermost alpha-1,3-linked glucose residues from the Glc(2)Man(9)GlcNAc(2) oligosaccharide precursor of immature glycoproteins. Required for efficient PKD1/Polycystin-1 biogenesis and trafficking to the plasma membrane of the primary cilia. This Mus musculus (Mouse) protein is Glucosidase 2 subunit beta.